Reading from the N-terminus, the 159-residue chain is Mesogenin-1 (159 aa).

Residues Pro-79–Ser-101 form a disordered region. Residues Lys-86–Ala-100 are compositionally biased toward basic residues. A bHLH domain is found at Gln-95–Leu-149.

The protein resides in the nucleus. In terms of biological role, involved in specifying the paraxial, but not dorsal, mesoderm. May regulate the expression of T-box transcription factors required for mesoderm formation and differentiation. This chain is Mesogenin-1 (MSGN1), found in Gallus gallus (Chicken).